A 67-amino-acid chain; its full sequence is Small ribosomal subunit protein eS31 (67 aa).

The Zn(2+) site is built by Cys31, Cys34, Cys49, and Cys52. The segment at 31-52 (CPKCGAGVFMAEHLNRFACGKC) adopts a C4-type zinc-finger fold.

It belongs to the eukaryotic ribosomal protein eS31 family. Part of the 30S ribosomal subunit. Zn(2+) serves as cofactor.

The chain is Small ribosomal subunit protein eS31 from Methanococcus maripaludis (strain C7 / ATCC BAA-1331).